The chain runs to 338 residues: MIASEIFERGVQDPFCQDCDYEDETDVQSFLGSNDLNDFVNSKLASFSFENSSKSNNSHHSSSTNAGNTSRHIGNHTIGHHLRKIKTAPHHLYGFVPANSTNNSNEPIRPSPRRIRANSSTLIHQLSRQSTRQSSLGDAADSCFDHKCIKPRSRHSSCYGIPTHLYGLEKYVSSELDSLAVANDQSNDLTSPLTSVSTPASNSNSYLNLNSSSAAYPSSYLSNEKNNRLKLISHGKISSNNVPGHSGNLNHYHRERTPSNLRRESFSLLSNGSSSSPLQTRNNSYSNSLVKSPSNSSLNTSVASSNEESSPHTSNCLEERNPRRKSFIKLSLASSFSN.

Positions 50–70 are enriched in low complexity; that stretch reads ENSSKSNNSHHSSSTNAGNTS. Positions 50–72 are disordered; sequence ENSSKSNNSHHSSSTNAGNTSRH. At Ser119 the chain carries Phosphoserine. Residues 267–306 are compositionally biased toward low complexity; it reads SLLSNGSSSSPLQTRNNSYSNSLVKSPSNSSLNTSVASSN. Positions 267–322 are disordered; that stretch reads SLLSNGSSSSPLQTRNNSYSNSLVKSPSNSSLNTSVASSNEESSPHTSNCLEERNP. The span at 307-316 shows a compositional bias: polar residues; it reads EESSPHTSNC.

The protein belongs to the ISF1/MBR1 family.

In terms of biological role, could influence the NAM7/UPF1 function, possibly at the level of mRNA turnover. Participates in mitochondrial biogenesis. This is Increasing suppression factor 1 (ISF1) from Saccharomyces cerevisiae (strain JAY291) (Baker's yeast).